Consider the following 178-residue polypeptide: MSMNSNVYVAKLGKTVGLQGHLRLFIDSDFPEQFKKGVTFTTNRNLQLKVLEYNSSRELVKFENYEDVELAKKLTNQELYATIEQTKENCKLAKNEFFWFDLISCEVFENNLKLGTVKEIHRYPLNDYLEIITDSELVKKALPKNFLIPHIFDKFILNIDIENKRIDVINSFDILENS.

The 81-residue stretch at 94 to 174 (KNEFFWFDLI…RIDVINSFDI (81 aa)) folds into the PRC barrel domain.

It belongs to the RimM family. Binds ribosomal protein uS19.

It localises to the cytoplasm. Functionally, an accessory protein needed during the final step in the assembly of 30S ribosomal subunit, possibly for assembly of the head region. Essential for efficient processing of 16S rRNA. May be needed both before and after RbfA during the maturation of 16S rRNA. It has affinity for free ribosomal 30S subunits but not for 70S ribosomes. This Aliarcobacter butzleri (strain RM4018) (Arcobacter butzleri) protein is Ribosome maturation factor RimM.